Here is a 466-residue protein sequence, read N- to C-terminus: Asparagine--tRNA ligase (466 aa).

Belongs to the class-II aminoacyl-tRNA synthetase family. In terms of assembly, homodimer.

The protein resides in the cytoplasm. The catalysed reaction is tRNA(Asn) + L-asparagine + ATP = L-asparaginyl-tRNA(Asn) + AMP + diphosphate + H(+). This chain is Asparagine--tRNA ligase, found in Shewanella sediminis (strain HAW-EB3).